We begin with the raw amino-acid sequence, 362 residues long: Quinolone epoxide rearrangement protein penF (362 aa).

The active site involves H220. The active-site Broensted acid is E222.

This sequence belongs to the quinolone epoxide rearrangement protein penF family.

The catalysed reaction is [(1'E)-5'-(3',3'-dimethyloxiran-2'-yl)-3'-hydroxy-3'-methylpent-1'-en-1'-yl]-quinolinone B = yaequinolone D. Its pathway is secondary metabolite biosynthesis. It functions in the pathway alkaloid biosynthesis. It participates in mycotoxin biosynthesis. Functionally, quinolone epoxide rearrangement protein; part of the gene cluster that mediates the biosynthesis of penigequinolones, potent insecticidal alkaloids that contain a highly modified 10-carbon prenyl group. The first stage is catalyzed by the nonribosomal peptide synthetase penN that condenses anthranilic acid and O-methyl-L-tyrosine to produce 4'-methoxycyclopeptin. 4'-methoxycyclopeptin is then converted to 4'-methoxydehydrocyclopeptin by the ketoglutarate-dependent dioxygenase penM through dehydrogenation to form a double bond between C-alpha and C-beta of the O-methyltyrosine side chain. PenM also converts its first product methoxydehydrocyclopeptin to 4'-methoxycyclopenin. The following conversion of 4'methoxycyclopenin into 4'-methoxyviridicatin is catalyzed by the cyclopenase penL. 4'-methoxyviridicatin is the precursor of quinolone natural products, and is further converted to quinolinone B. The prenyltransferase penI then catalyzes the canonical Friedel-Crafts alkylation of quinolinone B with dimethylallyl cation to yield dimethylallyl quinolone, which is subjected to FAD-dependent dehydrogenation by the FAD-linked oxidoreductase penH to yield conjugated aryl diene. The delta(3') double bond then serves as the site of the second alkylation with DMAPP catalyzed by the prenyltransferase penG to yield a carbenium ion intermediate, which can be attacked by H(2)O to yield a styrenyl quinolone containing a C3'-hydroxyprenyl chain, or undergo cyclization to yield yaequinolones J1 and J2. The conversion of the styrenyl quinolone into the tetrahydrofuran-containing yaequinolone C is performed by the FAD-dependent monooxygenase penE and involves epoxidation of the terminal C7'-C8' olefin, followed by epoxide ring opening initiated by the C3' hydroxyl group. The predicted cysteine hydrolase penJ acts as an epoxide hydrolase that enhances the rate of the 5-exo-tet cyclization step, increasing the yield of yaequinolone C. PenF catalyzes the cationic rearrangement of the epoxide formed by penE (before ring opening to produce yaequinolone C) into yaequinolone D. Finally, the short-chain dehydrogenase/reductase (SDR)-like reductase penD, catalyzes both the dehydration of yaequinolone D and the reduction of the resulting oxonium to yield penigequinolone. This chain is Quinolone epoxide rearrangement protein penF, found in Penicillium thymicola.